Consider the following 109-residue polypeptide: Large ribosomal subunit protein uL24 (109 aa).

The protein belongs to the universal ribosomal protein uL24 family. In terms of assembly, part of the 50S ribosomal subunit.

In terms of biological role, one of two assembly initiator proteins, it binds directly to the 5'-end of the 23S rRNA, where it nucleates assembly of the 50S subunit. One of the proteins that surrounds the polypeptide exit tunnel on the outside of the subunit. This is Large ribosomal subunit protein uL24 from Legionella pneumophila subsp. pneumophila (strain Philadelphia 1 / ATCC 33152 / DSM 7513).